The chain runs to 162 residues: Sorting nexin-3 (162 aa).

Ala2 is modified (N-acetylalanine). In terms of domain architecture, PX spans Asn27 to Asp151. Arg43 is subject to Omega-N-methylarginine. Residues Arg70, Ser72, Lys95, and Arg118 each coordinate a 1,2-diacyl-sn-glycero-3-phospho-(1D-myo-inositol-3-phosphate). Ser72 carries the post-translational modification Phosphoserine. Lys95 is covalently cross-linked (Glycyl lysine isopeptide (Lys-Gly) (interchain with G-Cter in SUMO2)). The segment at Asp147–Ala162 is binds predominantly to PtdIns(P5) and weaker to PtdIns(P3) abd PtdIns(P4); involved in neurite outgrowth regulation.

It belongs to the sorting nexin family. In terms of assembly, interacts with VPS26A, VPS29. Interacts with VPS35; the interaction with VPS35 is direct. The association with the retromer CSC subcomplex subunits is proposed to represent a functional distinct retromer variant described as SNX3-retromer complex. Interacts with USP10 and SCNN1A. Interacts with TRFC. Interacts with SNX8; 2 molecules of SNX8 seems to associate with one molecule of SNX3. Interacts with PTPRU. Interacts with MON2 and DOP1B. Post-translationally, ubiquitinated, leading to its proteasomal degradation. Deubiquitinated by USP10. As to expression, highly expressed in developing red cells and hematopoietic tissues.

The protein resides in the early endosome. It is found in the cytoplasmic vesicle. Its subcellular location is the phagosome. In terms of biological role, phosphoinositide-binding protein required for multivesicular body formation. Specifically binds phosphatidylinositol 3-phosphate (PtdIns(P3)). Can also bind phosphatidylinositol 4-phosphate (PtdIns(P4)), phosphatidylinositol 5-phosphate (PtdIns(P5)) and phosphatidylinositol 3,5-biphosphate (PtdIns(3,5)P2). Plays a role in protein transport between cellular compartments. Together with RAB7A facilitates endosome membrane association of the retromer cargo-selective subcomplex (CSC). May act in part as component of the SNX3-retromer complex which mediates the retrograde endosome-to-TGN transport of WLS distinct from the SNX-BAR retromer pathway. Promotes stability and cell surface expression of epithelial sodium channel (ENAC) subunits SCNN1A and SCNN1G. Not involved in EGFR degradation. Involved in the regulation of phagocytosis in dendritic cells possibly by regulating EEA1 recruitment to the nascent phagosomes. Involved in iron homeostasis through regulation of endocytic recycling of the transferrin receptor Tfrc presuambly by delivering the transferrin:transferrin receptor complex to recycling endosomes; the function may involve the CSC retromer subcomplex. Involved in regulation of neurite outgrowth in primary neurons. This is Sorting nexin-3 (Snx3) from Mus musculus (Mouse).